Here is a 371-residue protein sequence, read N- to C-terminus: Aminomethyltransferase (371 aa).

This sequence belongs to the GcvT family. In terms of assembly, the glycine cleavage system is composed of four proteins: P, T, L and H.

It carries out the reaction N(6)-[(R)-S(8)-aminomethyldihydrolipoyl]-L-lysyl-[protein] + (6S)-5,6,7,8-tetrahydrofolate = N(6)-[(R)-dihydrolipoyl]-L-lysyl-[protein] + (6R)-5,10-methylene-5,6,7,8-tetrahydrofolate + NH4(+). The glycine cleavage system catalyzes the degradation of glycine. In Nitrosococcus oceani (strain ATCC 19707 / BCRC 17464 / JCM 30415 / NCIMB 11848 / C-107), this protein is Aminomethyltransferase.